We begin with the raw amino-acid sequence, 68 residues long: UPF0253 protein ASA_2184 (68 aa).

Belongs to the UPF0253 family.

The sequence is that of UPF0253 protein ASA_2184 from Aeromonas salmonicida (strain A449).